Reading from the N-terminus, the 921-residue chain is Glutamate receptor 3.7 (921 aa).

A signal peptide spans 1-25; it reads MGLGIDPSVAITALIVVILVVPMDC. Over 26-580 the chain is Extracellular; that stretch reads QRPQLVNIGA…WIFLRPFTSR (555 aa). 7 N-linked (GlcNAc...) asparagine glycosylation sites follow: N214, N300, N330, N369, N396, N478, and N568. The chain crosses the membrane as a helical span at residues 581-601; the sequence is LWCVVLVSFLVIAVVIWILEH. The Cytoplasmic segment spans residues 602–608; it reads RINEDFR. A helical membrane pass occupies residues 609 to 629; the sequence is GPPRRQLSTMLLFSFSTLFKR. Over 630 to 640 the chain is Cytoplasmic; the sequence is NQEDTISNLAR. The helical transmembrane segment at 641-661 threads the bilayer; the sequence is LVMIVWLFLLMVLTASYTANL. The Extracellular portion of the chain corresponds to 662 to 822; that stretch reads TSILTVQQLP…PEPNQLHLKS (161 aa). Residues 823–843 form a helical membrane-spanning segment; the sequence is FKGLYLVCIAITVSAFLVFVL. Residues 844 to 921 lie on the Cytoplasmic side of the membrane; that stretch reads RMIRQFVRYR…VQADTEVPRN (78 aa). The tract at residues 896–921 is disordered; it reads FRRSDDSNNNPSHVGEVQADTEVPRN.

Belongs to the glutamate-gated ion channel (TC 1.A.10.1) family. In terms of assembly, may form heteromers. Expressed predominantly in leaves and siliques. Also detected in roots.

Its subcellular location is the membrane. Glutamate-gated receptor that probably acts as a non-selective cation channel. May be involved in light-signal transduction and calcium homeostasis via the regulation of calcium influx into cells. This is Glutamate receptor 3.7 (GLR3.7) from Arabidopsis thaliana (Mouse-ear cress).